The primary structure comprises 377 residues: tRNA-specific 2-thiouridylase MnmA (377 aa).

Residues Gly22–Ser29 and Met48 contribute to the ATP site. The tract at residues Asn108–Asp110 is interaction with target base in tRNA. Cys113 functions as the Nucleophile in the catalytic mechanism. A disulfide bridge links Cys113 with Cys210. ATP is bound at residue Gly138. The segment at Lys160–Gln162 is interaction with tRNA. The Cysteine persulfide intermediate role is filled by Cys210. The tract at residues Arg322–Tyr323 is interaction with tRNA.

The protein belongs to the MnmA/TRMU family.

Its subcellular location is the cytoplasm. It catalyses the reaction S-sulfanyl-L-cysteinyl-[protein] + uridine(34) in tRNA + AH2 + ATP = 2-thiouridine(34) in tRNA + L-cysteinyl-[protein] + A + AMP + diphosphate + H(+). Catalyzes the 2-thiolation of uridine at the wobble position (U34) of tRNA, leading to the formation of s(2)U34. The protein is tRNA-specific 2-thiouridylase MnmA of Shewanella amazonensis (strain ATCC BAA-1098 / SB2B).